A 306-amino-acid chain; its full sequence is Protoheme IX farnesyltransferase (306 aa).

Transmembrane regions (helical) follow at residues Leu35–Leu55, Leu61–Val81, Leu106–Val126, Leu129–Leu149, Ile157–Gly177, Ala183–Leu203, Glu224–Pro244, Phe245–Phe265, and Arg286–Ile306.

Belongs to the UbiA prenyltransferase family. Protoheme IX farnesyltransferase subfamily.

It is found in the cell inner membrane. It carries out the reaction heme b + (2E,6E)-farnesyl diphosphate + H2O = Fe(II)-heme o + diphosphate. Its pathway is porphyrin-containing compound metabolism; heme O biosynthesis; heme O from protoheme: step 1/1. Functionally, converts heme B (protoheme IX) to heme O by substitution of the vinyl group on carbon 2 of heme B porphyrin ring with a hydroxyethyl farnesyl side group. This Polaromonas naphthalenivorans (strain CJ2) protein is Protoheme IX farnesyltransferase.